Consider the following 376-residue polypeptide: tRNA-specific 2-thiouridylase MnmA (376 aa).

Residues G17 to S24 and M43 contribute to the ATP site. The interaction with target base in tRNA stretch occupies residues N103 to D105. The active-site Nucleophile is the C108. C108 and C204 are joined by a disulfide. G132 is a binding site for ATP. Positions K154 to Q156 are interaction with tRNA. C204 acts as the Cysteine persulfide intermediate in catalysis. The tract at residues R316–Y317 is interaction with tRNA.

This sequence belongs to the MnmA/TRMU family.

It is found in the cytoplasm. It carries out the reaction S-sulfanyl-L-cysteinyl-[protein] + uridine(34) in tRNA + AH2 + ATP = 2-thiouridine(34) in tRNA + L-cysteinyl-[protein] + A + AMP + diphosphate + H(+). Its function is as follows. Catalyzes the 2-thiolation of uridine at the wobble position (U34) of tRNA, leading to the formation of s(2)U34. This chain is tRNA-specific 2-thiouridylase MnmA, found in Pseudomonas syringae pv. syringae (strain B728a).